The primary structure comprises 475 residues: F-box/kelch-repeat protein At1g22040 (475 aa).

Residues 1-28 are disordered; sequence MGSVMSLSCSKRKATSQDVECSSESRKR. The F-box domain occupies 41–87; it reads CRLIPSLPDELSIQILARLPRICYSSVRLVSRRWRSAVSTSEVYSLR. Kelch repeat units lie at residues 94–140, 182–228, 229–279, 306–350, and 352–401; these read EEWL…KSLS, GLYV…VLNK, KLYV…AFLA, PFFV…VDGE, and YAFD…GFHG.

This Arabidopsis thaliana (Mouse-ear cress) protein is F-box/kelch-repeat protein At1g22040.